Here is a 228-residue protein sequence, read N- to C-terminus: Large ribosomal subunit protein uL1 (228 aa).

It belongs to the universal ribosomal protein uL1 family. As to quaternary structure, part of the 50S ribosomal subunit.

Functionally, binds directly to 23S rRNA. The L1 stalk is quite mobile in the ribosome, and is involved in E site tRNA release. Protein L1 is also a translational repressor protein, it controls the translation of the L11 operon by binding to its mRNA. This Clavibacter michiganensis subsp. michiganensis (strain NCPPB 382) protein is Large ribosomal subunit protein uL1.